A 600-amino-acid chain; its full sequence is Nisin transport ATP-binding protein NisT (600 aa).

The next 5 helical transmembrane spans lie at 34–54, 69–89, 147–167, 168–188, and 260–280; these read AIYL…SLFI, LINI…LGQL, AIIV…FIGT, WNIG…VLFL, and IFLD…MILS. Positions 34–317 constitute an ABC transmembrane type-1 domain; the sequence is AIYLIVLNAI…MIQNIYIIYN (284 aa). The ABC transporter domain occupies 352 to 592; the sequence is VKVINLSYVY…CQYYQELYYS (241 aa). 386 to 393 serves as a coordination point for ATP; the sequence is GKNGSGKS.

Belongs to the ABC transporter superfamily. Nisin exporter (TC 3.A.1.111.3) family.

The protein localises to the cell membrane. In terms of biological role, probably implicated in the export process of the lantibiotic nisin. This Lactococcus lactis subsp. lactis (Streptococcus lactis) protein is Nisin transport ATP-binding protein NisT (nisT).